The sequence spans 471 residues: Dynein regulatory complex subunit 4 (471 aa).

The tract at residues Met1 to Gly24 is disordered. Coiled coils occupy residues Glu23–Ile239 and Leu282–Lys425.

This sequence belongs to the DRC4 family. As to quaternary structure, component of the nexin-dynein regulatory complex (N-DRC). Interacts with DRC1, DRC2 and DRC5.

It is found in the cytoplasm. The protein resides in the cytoskeleton. It localises to the flagellum axoneme. The protein localises to the flagellum basal body. Component of the nexin-dynein regulatory complex (N-DRC), a key regulator of ciliary/flagellar motility which maintains the alignment and integrity of the distal axoneme and regulates microtubule sliding in motile axonemes. Plays an important role in the assembly of the N-DRC linker. The polypeptide is Dynein regulatory complex subunit 4 (Chlamydomonas reinhardtii (Chlamydomonas smithii)).